The primary structure comprises 103 residues: Large ribosomal subunit protein bL21 (103 aa).

The protein belongs to the bacterial ribosomal protein bL21 family. Part of the 50S ribosomal subunit. Contacts protein L20.

Its function is as follows. This protein binds to 23S rRNA in the presence of protein L20. This is Large ribosomal subunit protein bL21 from Pseudomonas syringae pv. tomato (strain ATCC BAA-871 / DC3000).